Consider the following 815-residue polypeptide: Cell division control protein 53 (815 aa).

Residues 9 to 280 form a required for interaction with SKP1/CBF3D and F-box protein region; sequence DDLEATWNFI…WDDHTKKPLS (272 aa). The required for interaction with CDC34/UBC3 stretch occupies residues 448–748; the sequence is KKATKPEVAS…IEKELNTERQ (301 aa). Residues 746 to 807 enclose the Cullin neddylation domain; the sequence is ERQIFLEACI…QKGYLQRGDD (62 aa). A Glycyl lysine isopeptide (Lys-Gly) (interchain with G-Cter in NEDD8) cross-link involves residue K760.

It belongs to the cullin family. In terms of assembly, component of multiple SCF (SKP1-CUL1-F-box) E3 ubiquitin-protein ligase complexes formed of CUL1, SKP1/HRT1, RBX1 and a variable F-box domain-containing protein as substrate-specific adapter. Component of the SCF(CDC4) complex containing CDC4. Component of the SCF(MET30) complex containing MET30. Component of the SCF(GRR1) complex containing GRR1. Component of the probable SCF(DIA2) complex containing DIA2. Component of the probable SCF(YDR131C) complex containing YDR131C. Component of the probable SCF(YDR306C) complex containing YDR306C. Component of the probable SCF(YLR224W) complex containing YLR224W. Component of the probable SCF(YJL149W) complex containing YJL149W. Component of the probable SCF(YNL311C) complex containing YNL311C. Component of the probable SCF(MDM30) complex containing MDM30. Component of the probable SCF(UFO1) complex containing UFO1. Component of the probable SCF(HRT3) complex containing HRT3. Component of the probable SCF(YBR280C) complex containing YBR280C. Component of the probable SCF(YBR352W) complex containing YBR352W. Interacts with DCN1, YBR280C, YLR224W and YLR352W. The unneddylated form interacts with LAG2/CAND1 and the interaction mediates the exchange of the F-box substrate-specific subunit. In terms of processing, neddylated; enhancing the ubiquitin-ligase activity.

The protein resides in the cytoplasm. Its subcellular location is the nucleus. In terms of biological role, core component of multiple cullin-RING-based SCF (SKP1-CUL1-F-box) E3 ubiquitin-protein ligase complexes which mediate the ubiquitination and subsequent proteasomal degradation of target proteins. As a scaffold protein may contribute to catalysis through positioning of the substrate and the ubiquitin-conjugating enzyme. The SCF complex associates with CDC34 as the E2 ubiquitin-conjugating enzyme. The functional specificity of the SCF complex depends on the type of F-box protein. SCF(CDC4) controls the G1-to-S phase transition; it directs ubiquitination of the phosphorylated CDK inhibitor SIC1 and of CDC6. SCF(CDC4) directs ubiquitination of GCN4. SCF(GRR1) directs ubiquitination of phosphorylated CLN1, CLN2 and GIC2. SCF(MET30) directs ubiquitination of MET4. SCF(DIA2) is specifically involved in the pheromone induced degradation of phosphorylated TEC1. SCF(MDM30) seems to direct ubiquitination of FZ01. Involved in the regulation of methionine biosynthesis genes. In Saccharomyces cerevisiae (strain ATCC 204508 / S288c) (Baker's yeast), this protein is Cell division control protein 53 (CDC53).